The sequence spans 427 residues: Tol-Pal system protein TolB (427 aa).

An N-terminal signal peptide occupies residues 1–23 (MKLLKRLVSVFAIVLAVGSNAFA).

It belongs to the TolB family. The Tol-Pal system is composed of five core proteins: the inner membrane proteins TolA, TolQ and TolR, the periplasmic protein TolB and the outer membrane protein Pal. They form a network linking the inner and outer membranes and the peptidoglycan layer.

The protein localises to the periplasm. Its function is as follows. Part of the Tol-Pal system, which plays a role in outer membrane invagination during cell division and is important for maintaining outer membrane integrity. The chain is Tol-Pal system protein TolB from Haemophilus influenzae (strain ATCC 51907 / DSM 11121 / KW20 / Rd).